The sequence spans 453 residues: DNA repair protein RadA (453 aa).

The C4-type zinc-finger motif lies at cysteine 11 to cysteine 28. ATP is bound at residue glycine 93–serine 100. A RadA KNRFG motif motif is present at residues lysine 250–glycine 254. Positions aspartate 349–leucine 453 are lon-protease-like.

Belongs to the RecA family. RadA subfamily.

DNA-dependent ATPase involved in processing of recombination intermediates, plays a role in repairing DNA breaks. Stimulates the branch migration of RecA-mediated strand transfer reactions, allowing the 3' invading strand to extend heteroduplex DNA faster. Binds ssDNA in the presence of ADP but not other nucleotides, has ATPase activity that is stimulated by ssDNA and various branched DNA structures, but inhibited by SSB. Does not have RecA's homology-searching function. This is DNA repair protein RadA from Chlamydia pneumoniae (Chlamydophila pneumoniae).